The chain runs to 87 residues: Large ribosomal subunit protein bL27 (87 aa).

Positions 1–20 (MAHKKAGGSSRNGRDSESKR) are disordered.

The protein belongs to the bacterial ribosomal protein bL27 family.

The chain is Large ribosomal subunit protein bL27 from Thiobacillus denitrificans (strain ATCC 25259 / T1).